The primary structure comprises 111 residues: Cytochrome c oxidase subunit 6A1, mitochondrial (111 aa).

The transit peptide at 1–26 (MASAVLSASRVSRPLGRALPGLRRPM) directs the protein to the mitochondrion. The Mitochondrial matrix segment spans residues 27–36 (SSGAHGEEGS). A helical membrane pass occupies residues 37-61 (ARMWKALTYFVALPGVGVSMLNVFL). The Mitochondrial intermembrane segment spans residues 62 to 111 (KSRHEEHERPPFVAYPHLRIRTKPFPWGDGNHTLFHNPHVNPLPTGYEDE).

Belongs to the cytochrome c oxidase subunit 6A family. As to quaternary structure, component of the cytochrome c oxidase (complex IV, CIV), a multisubunit enzyme composed of 14 subunits. The complex is composed of a catalytic core of 3 subunits MT-CO1, MT-CO2 and MT-CO3, encoded in the mitochondrial DNA, and 11 supernumerary subunits COX4I, COX5A, COX5B, COX6A, COX6B, COX6C, COX7A, COX7B, COX7C, COX8 and NDUFA4, which are encoded in the nuclear genome. The complex exists as a monomer or a dimer and forms supercomplexes (SCs) in the inner mitochondrial membrane with NADH-ubiquinone oxidoreductase (complex I, CI) and ubiquinol-cytochrome c oxidoreductase (cytochrome b-c1 complex, complex III, CIII), resulting in different assemblies (supercomplex SCI(1)III(2)IV(1) and megacomplex MCI(2)III(2)IV(2)).

The protein localises to the mitochondrion inner membrane. Its pathway is energy metabolism; oxidative phosphorylation. In terms of biological role, component of the cytochrome c oxidase, the last enzyme in the mitochondrial electron transport chain which drives oxidative phosphorylation. The respiratory chain contains 3 multisubunit complexes succinate dehydrogenase (complex II, CII), ubiquinol-cytochrome c oxidoreductase (cytochrome b-c1 complex, complex III, CIII) and cytochrome c oxidase (complex IV, CIV), that cooperate to transfer electrons derived from NADH and succinate to molecular oxygen, creating an electrochemical gradient over the inner membrane that drives transmembrane transport and the ATP synthase. Cytochrome c oxidase is the component of the respiratory chain that catalyzes the reduction of oxygen to water. Electrons originating from reduced cytochrome c in the intermembrane space (IMS) are transferred via the dinuclear copper A center (CU(A)) of subunit 2 and heme A of subunit 1 to the active site in subunit 1, a binuclear center (BNC) formed by heme A3 and copper B (CU(B)). The BNC reduces molecular oxygen to 2 water molecules unsing 4 electrons from cytochrome c in the IMS and 4 protons from the mitochondrial matrix. The protein is Cytochrome c oxidase subunit 6A1, mitochondrial (Cox6a1) of Mus musculus (Mouse).